A 385-amino-acid chain; its full sequence is Bifunctional chorismate mutase/prephenate dehydratase (385 aa).

The 92-residue stretch at Met-1 to Leu-92 folds into the Chorismate mutase domain. Substrate contacts are provided by Arg-11, Arg-28, Lys-39, Asp-48, Glu-52, Ser-84, and Gln-88. One can recognise a Prephenate dehydratase domain in the interval Asn-105–Arg-285. The segment at Asn-286–Pro-385 is regulatory. Positions Thr-299–Pro-376 constitute an ACT domain.

Its subcellular location is the cytoplasm. The enzyme catalyses chorismate = prephenate. The catalysed reaction is prephenate + H(+) = 3-phenylpyruvate + CO2 + H2O. It functions in the pathway amino-acid biosynthesis; L-phenylalanine biosynthesis; phenylpyruvate from prephenate: step 1/1. It participates in metabolic intermediate biosynthesis; prephenate biosynthesis; prephenate from chorismate: step 1/1. In terms of biological role, catalyzes the Claisen rearrangement of chorismate to prephenate and the decarboxylation/dehydration of prephenate to phenylpyruvate. This is Bifunctional chorismate mutase/prephenate dehydratase (pheA) from Buchnera aphidicola subsp. Acyrthosiphon pisum (strain APS) (Acyrthosiphon pisum symbiotic bacterium).